Here is a 95-residue protein sequence, read N- to C-terminus: Acylphosphatase (95 aa).

The Acylphosphatase-like domain occupies 6–94 (RVRVIVKGIV…EDFTGFSVRY (89 aa)). Residues Arg-21 and Asn-39 contribute to the active site.

Belongs to the acylphosphatase family.

It carries out the reaction an acyl phosphate + H2O = a carboxylate + phosphate + H(+). This is Acylphosphatase (acyP) from Caldivirga maquilingensis (strain ATCC 700844 / DSM 13496 / JCM 10307 / IC-167).